Consider the following 77-residue polypeptide: Chaplin-H (77 aa).

The first 25 residues, 1–25, serve as a signal peptide directing secretion; sequence MLKKVVAAAAATGGLVLAGAGMAVA. In terms of domain architecture, Chaplin spans 36-76; sequence SPGVLSGNVVQVPVHVPVNVCGNTISVIGLLNPAFGNVCIN. 2 forms amyloid fibrils in vitro regions span residues 38-54 and 57-72; these read GVLSGNVVQVPVHVPVN and GNTISVIGLLNPAFGN. An intrachain disulfide couples C56 to C74.

The protein belongs to the chaplin family. Short chaplin subfamily. As to quaternary structure, homodimer; disulfide linked. About 10% of ChpH isolated from cell wall forms disulfide-bonded homodimers.

It localises to the cell surface. The protein resides in the secreted. Its subcellular location is the cell wall. It is found in the fimbrium. One of 8 partially redundant surface-active proteins required for efficient formation of aerial mycelium; the short chaplins assemble into a hydrophobic, amyloidal fibrillar surface layer that envelopes and protects aerial hyphae and spores, presumably anchored to the long chaplins. Chaplins have an overlapping function with the surface-active SapB peptide; chaplins are essential on minimal medium while on rich medium both chaplins and SapB are required for efficient aerial hyphae formation. Chaplins are also involved in cell attachment to a hydrophobic surface. Forms amyloid fibrils in vitro probably composed of stacked beta-sheets. A small chaplin extract (ChpD, ChpE, ChpF, ChpG and ChpH) self-assembles into 2 different amyloids; small fibrils at the air-water interface form an amphipathic membrane that resembles spore-surface structures involved in aerial hyphae formation, and hydrophilic fibrils in solution that resemble the fibers that attach cells to a hydrophobic surface. At the air-water interface the hydrophilic surface is in contact with water (probably equivalent to the peptidoglycan layer), while the hydrophobic face is exposed to the air, making the surface of the aerial hyphae hydrophobic. A minimal chaplin strain capable of forming aerial mycelium/hyphae on minimal medium contains ChpC, ChpE and ChpH. The strain also has restored rodlet formation on the hyphae surface. A small chaplin extract applied to a chaplin-deficient strain restores aerial hyphae formation. The small chaplin extract forms an amyloid-like structure similar to that seen on the surface of cells without rodlets (rdlA-rdlB deletions), and is highly surface active, reducing surface tension from 72 to 26 mJ/m(2), which probably allows escape of hyphae from an aqueous environment into air. The chain is Chaplin-H from Streptomyces coelicolor (strain ATCC BAA-471 / A3(2) / M145).